Here is a 483-residue protein sequence, read N- to C-terminus: ATP synthase subunit beta (483 aa).

169–176 (GGAGVGKT) contacts ATP.

Belongs to the ATPase alpha/beta chains family. As to quaternary structure, F-type ATPases have 2 components, CF(1) - the catalytic core - and CF(0) - the membrane proton channel. CF(1) has five subunits: alpha(3), beta(3), gamma(1), delta(1), epsilon(1). CF(0) has three main subunits: a(1), b(2) and c(9-12). The alpha and beta chains form an alternating ring which encloses part of the gamma chain. CF(1) is attached to CF(0) by a central stalk formed by the gamma and epsilon chains, while a peripheral stalk is formed by the delta and b chains.

It is found in the cell membrane. The catalysed reaction is ATP + H2O + 4 H(+)(in) = ADP + phosphate + 5 H(+)(out). Its function is as follows. Produces ATP from ADP in the presence of a proton gradient across the membrane. The catalytic sites are hosted primarily by the beta subunits. The polypeptide is ATP synthase subunit beta (Rhodococcus erythropolis (strain PR4 / NBRC 100887)).